The following is a 210-amino-acid chain: ATP-dependent Clp protease proteolytic subunit (210 aa).

Ser107 serves as the catalytic Nucleophile. His132 is an active-site residue.

It belongs to the peptidase S14 family. As to quaternary structure, fourteen ClpP subunits assemble into 2 heptameric rings which stack back to back to give a disk-like structure with a central cavity, resembling the structure of eukaryotic proteasomes.

The protein resides in the cytoplasm. The enzyme catalyses Hydrolysis of proteins to small peptides in the presence of ATP and magnesium. alpha-casein is the usual test substrate. In the absence of ATP, only oligopeptides shorter than five residues are hydrolyzed (such as succinyl-Leu-Tyr-|-NHMec, and Leu-Tyr-Leu-|-Tyr-Trp, in which cleavage of the -Tyr-|-Leu- and -Tyr-|-Trp bonds also occurs).. Its function is as follows. Cleaves peptides in various proteins in a process that requires ATP hydrolysis. Has a chymotrypsin-like activity. Plays a major role in the degradation of misfolded proteins. This Cereibacter sphaeroides (strain ATCC 17025 / ATH 2.4.3) (Rhodobacter sphaeroides) protein is ATP-dependent Clp protease proteolytic subunit.